We begin with the raw amino-acid sequence, 535 residues long: CTP synthase (535 aa).

Residues 1–267 (MTKFIFVTGG…DDIVIQRLQL (267 aa)) form an amidoligase domain region. S13 serves as a coordination point for CTP. S13 lines the UTP pocket. 14–19 (SLGKGI) serves as a coordination point for ATP. Y54 is a binding site for L-glutamine. D71 contacts ATP. Residues D71 and E141 each coordinate Mg(2+). Residues 148–150 (DIE), 188–193 (KTKPTQ), and K224 each bind CTP. UTP-binding positions include 188–193 (KTKPTQ) and K224. 240–242 (RDA) is an ATP binding site. Positions 293-535 (TIGLVGKYVS…VEAALNYQQK (243 aa)) constitute a Glutamine amidotransferase type-1 domain. G355 is a binding site for L-glutamine. C382 functions as the Nucleophile; for glutamine hydrolysis in the catalytic mechanism. L-glutamine is bound by residues 383–386 (LGMQ), E406, and R463. Residues H508 and E510 contribute to the active site.

The protein belongs to the CTP synthase family. Homotetramer.

It carries out the reaction UTP + L-glutamine + ATP + H2O = CTP + L-glutamate + ADP + phosphate + 2 H(+). The enzyme catalyses L-glutamine + H2O = L-glutamate + NH4(+). The catalysed reaction is UTP + NH4(+) + ATP = CTP + ADP + phosphate + 2 H(+). It functions in the pathway pyrimidine metabolism; CTP biosynthesis via de novo pathway; CTP from UDP: step 2/2. Allosterically activated by GTP, when glutamine is the substrate; GTP has no effect on the reaction when ammonia is the substrate. The allosteric effector GTP functions by stabilizing the protein conformation that binds the tetrahedral intermediate(s) formed during glutamine hydrolysis. Inhibited by the product CTP, via allosteric rather than competitive inhibition. Catalyzes the ATP-dependent amination of UTP to CTP with either L-glutamine or ammonia as the source of nitrogen. Regulates intracellular CTP levels through interactions with the four ribonucleotide triphosphates. In Staphylococcus epidermidis (strain ATCC 35984 / DSM 28319 / BCRC 17069 / CCUG 31568 / BM 3577 / RP62A), this protein is CTP synthase.